A 551-amino-acid chain; its full sequence is uncharacterized protein (551 aa).

The transit peptide at 1–36 (MMALVRDRRAHYVMSIVIRWVHCFSSSLRGTFGTRW) directs the protein to the mitochondrion. The stretch at 203-315 (TNILLRKLKE…MDSRDRLREE (113 aa)) forms a coiled coil. Residues 354–389 (REASLSPWPKSPPSTTALRPHSATMSVSSAGAQKAK) form a disordered region. A compositionally biased stretch (polar residues) spans 366-384 (PSTTALRPHSATMSVSSAG). Residues 405 to 439 (KHGLESQIEALKANLENEKKKVERFRKEADRLNKS) are a coiled coil. Positions 519-551 (LQLSPKGKLSESPKEESLEEPSMRQSSPAETVD) are disordered. Over residues 541–551 (MRQSSPAETVD) the composition is skewed to polar residues.

In terms of assembly, interacts with NOD2.

It localises to the mitochondrion. This is an uncharacterized protein from Homo sapiens (Human).